Here is a 229-residue protein sequence, read N- to C-terminus: uncharacterized protein (229 aa).

The S4 RNA-binding domain maps to 2 to 69 (QRLAKIISNA…KPRLWIYYKP (68 aa)). The Nucleophile role is filled by D102.

The protein belongs to the pseudouridine synthase RsuA family.

It catalyses the reaction a uridine in RNA = a pseudouridine in RNA. This is an uncharacterized protein from Rickettsia felis (strain ATCC VR-1525 / URRWXCal2) (Rickettsia azadi).